A 788-amino-acid polypeptide reads, in one-letter code: Endonuclease MutS2 (788 aa).

Residue 332 to 339 (GPNTGGKT) participates in ATP binding. Residues 713 to 788 (VDLRGMDAEE…GTGVTVVELK (76 aa)) enclose the Smr domain.

This sequence belongs to the DNA mismatch repair MutS family. MutS2 subfamily. In terms of assembly, homodimer. Binds to stalled ribosomes, contacting rRNA.

Endonuclease that is involved in the suppression of homologous recombination and thus may have a key role in the control of bacterial genetic diversity. In terms of biological role, acts as a ribosome collision sensor, splitting the ribosome into its 2 subunits. Detects stalled/collided 70S ribosomes which it binds and splits by an ATP-hydrolysis driven conformational change. Acts upstream of the ribosome quality control system (RQC), a ribosome-associated complex that mediates the extraction of incompletely synthesized nascent chains from stalled ribosomes and their subsequent degradation. Probably generates substrates for RQC. The chain is Endonuclease MutS2 from Clostridium botulinum (strain Kyoto / Type A2).